We begin with the raw amino-acid sequence, 1179 residues long: Tubulin glycylase 3B (1179 aa).

A compositionally biased stretch (polar residues) spans 177–199 (NKGQTNNSNRENGGNFHSEQSPK). Disordered regions lie at residues 177–208 (NKGQ…VVSG), 250–278 (QQPQ…LPLS), 592–625 (KVLS…AVQQ), and 853–890 (QKQH…LKQD). Basic and acidic residues predominate over residues 592-601 (KVLSNTKSKD). Polar residues-rich tracts occupy residues 614–625 (KSKSNNQNAVQQ) and 881–890 (AQSSTSLKQD). Residues 790 to 1152 (FIDFYETVDF…SMAKKGTKKN (363 aa)) form the TTL domain. Residues 965–968 (QKYI), lysine 978, and aspartate 980 each bind ATP.

Its subcellular location is the cell projection. It localises to the cilium. The protein localises to the cytoplasm. It is found in the cytoskeleton. The protein resides in the cilium axoneme. Polyglycylase which modifies tubulin, generating side chains of glycine on the gamma-carboxyl groups of specific glutamate residues within the C-terminal tail of tubulin. Polyglycylates tubulin, with a preference for alpha-tubulin toward beta-tubulin. The sequence is that of Tubulin glycylase 3B (TTLL3B) from Tetrahymena thermophila (strain SB210).